The chain runs to 421 residues: Mannose-1-phosphate guanyltransferase alpha-A (421 aa).

The protein belongs to the transferase hexapeptide repeat family.

It carries out the reaction alpha-D-mannose 1-phosphate + GTP + H(+) = GDP-alpha-D-mannose + diphosphate. It participates in nucleotide-sugar biosynthesis; GDP-alpha-D-mannose biosynthesis; GDP-alpha-D-mannose from alpha-D-mannose 1-phosphate (GTP route): step 1/1. The chain is Mannose-1-phosphate guanyltransferase alpha-A (gmppa-a) from Xenopus laevis (African clawed frog).